The chain runs to 258 residues: (7aS)-7a-methyl-1,5-dioxo-2,3,5,6,7,7a-hexahydro-1H-indene-carboxyl-CoA hydrolase (258 aa).

It belongs to the enoyl-CoA hydratase/isomerase family.

It carries out the reaction (7aS)-7a-methyl-1,5-dioxo-2,3,5,6,7,7a-hexahydro-1H-indene-carboxyl-CoA + H2O = (3E)-2-(2-carboxylatoethyl)-3-methyl-6-oxocyclohex-1-ene-1-carboxyl-CoA + H(+). It participates in steroid metabolism; cholesterol degradation. Functionally, involved in the final steps of cholesterol and steroid degradation. Catalyzes the hydrolytic ring D opening of (7aS)-7a-methyl-1,5-dioxo-2,3,5,6,7,7a-hexahydro-1H-indene-carboxyl-CoA (HIEC-CoA) to (3E)-2-(2-carboxylatoethyl)-3-methyl-6-oxocyclohex-1-ene-1-carboxyl-CoA (COCHEA-CoA). In Rhodococcus jostii (strain RHA1), this protein is (7aS)-7a-methyl-1,5-dioxo-2,3,5,6,7,7a-hexahydro-1H-indene-carboxyl-CoA hydrolase.